A 128-amino-acid polypeptide reads, in one-letter code: Saitohin (128 aa).

Residues 77-128 (SYSSEESSRNGAEQGRQLSIEGPFQGQNCPSHPAAALPLPMRGESQATSCQV) are disordered.

As to quaternary structure, interacts with PRDX6. As to expression, highest expression in placenta, muscle, fetal brain, and adult brain, with lower expression in heart, kidney, stomach, testis, and adrenal gland. In the central nervous system, highest expression is in temporal lobe, hypothalamus, medulla and spinal cord, with lower expression in other brain regions.

The protein localises to the cytoplasm. The protein resides in the nucleus. In Homo sapiens (Human), this protein is Saitohin (STH).